Here is a 216-residue protein sequence, read N- to C-terminus: Ceramide-1-phosphate transfer protein (216 aa).

An N-acylsphingoid base 1-phosphate is bound by residues Asp-56, Lys-60, Arg-108, Arg-112, and His-152.

The protein belongs to the GLTP family.

Its subcellular location is the cytoplasm. It is found in the cytosol. The protein localises to the golgi apparatus. The protein resides in the trans-Golgi network membrane. It localises to the cell membrane. Its subcellular location is the endosome membrane. It is found in the nucleus outer membrane. The enzyme catalyses N-(hexadecanoyl)-sphing-4-enine-1-phosphate(in) = N-(hexadecanoyl)-sphing-4-enine-1-phosphate(out). It catalyses the reaction N-(9Z-octadecenoyl)-sphing-4-enine-1-phosphate(in) = N-(9Z-octadecenoyl)-sphing-4-enine-1-phosphate(out). Mediates the intracellular transfer of ceramide-1-phosphate (C1P) between organelle membranes and the cell membrane. Required for normal structure of the Golgi stacks. Can bind phosphoceramides with a variety of aliphatic chains, but has a preference for lipids with saturated C16:0 or monounsaturated C18:1 aliphatic chains, and is inefficient with phosphoceramides containing lignoceryl (C24:0). Plays a role in the regulation of the cellular levels of ceramide-1-phosphate, and thereby contributes to the regulation of phospholipase PLA2G4A activity and the release of arachidonic acid. Has no activity with galactosylceramide, lactosylceramide, sphingomyelin, phosphatidylcholine, phosphatidic acid and ceramide. C1P transfer is stimulated by phosphatidylserine in C1P source vesicles. Regulates autophagy, inflammasome mediated IL1B and IL18 processing, and pyroptosis, but not apoptosis. The chain is Ceramide-1-phosphate transfer protein from Mus musculus (Mouse).